The chain runs to 375 residues: Probable RNA 3'-terminal phosphate cyclase-like protein (375 aa).

The protein belongs to the RNA 3'-terminal cyclase family. Type 2 subfamily.

The protein localises to the nucleus. Its subcellular location is the nucleolus. Its function is as follows. Does not have cyclase activity. Plays a role in 40S-ribosomal-subunit biogenesis in the early pre-rRNA processing steps at sites A0, A1 and A2 that are required for proper maturation of the 18S RNA. This chain is Probable RNA 3'-terminal phosphate cyclase-like protein, found in Arabidopsis thaliana (Mouse-ear cress).